Here is a 375-residue protein sequence, read N- to C-terminus: Protein SSUH2 homolog (375 aa).

As to expression, expressed in enterocytes of small and large intestinal mucosa (at protein level). Expressed in chromaffine and interstitial cells. Expressed in peripheral blood and gingival cells.

The protein resides in the cytoplasm. Its subcellular location is the nucleus. Its function is as follows. Plays a role in odontogenesis. This Homo sapiens (Human) protein is Protein SSUH2 homolog.